The sequence spans 157 residues: Protein Smg homolog (157 aa).

It belongs to the Smg family.

This is Protein Smg homolog from Aliivibrio salmonicida (strain LFI1238) (Vibrio salmonicida (strain LFI1238)).